Here is a 161-residue protein sequence, read N- to C-terminus: Tropomyosin-2 (161 aa).

A coiled-coil region spans residues 1–161; the sequence is MEKIKEKLNS…DEIANSLENL (161 aa). Residues 32 to 43 are compositionally biased toward basic and acidic residues; it reads LEQSNTEKENEI. The segment at 32 to 97 is disordered; the sequence is LEQSNTEKEN…NQDLEQQLED (66 aa). S55 bears the Phosphoserine mark. Positions 62–83 are enriched in polar residues; that stretch reads SQLSDTKQLAEDSNNLRSNNEN. A phosphoserine mark is found at S116 and S157.

As to quaternary structure, homodimer.

The protein localises to the cytoplasm. Its subcellular location is the cytoskeleton. Involved in cell morphogenesis. Binds to F-actin and stabilizes the actin filaments. In Saccharomyces cerevisiae (strain ATCC 204508 / S288c) (Baker's yeast), this protein is Tropomyosin-2 (TPM2).